The sequence spans 205 residues: SCO2-like protein RP587 (205 aa).

Cu cation contacts are provided by cysteine 82, cysteine 86, and histidine 172.

The protein belongs to the SCO1/2 family.

This is SCO2-like protein RP587 from Rickettsia prowazekii (strain Madrid E).